Here is a 129-residue protein sequence, read N- to C-terminus: L-ectoine synthase (129 aa).

Belongs to the ectoine synthase family.

The enzyme catalyses (2S)-4-acetamido-2-aminobutanoate = L-ectoine + H2O. It participates in amine and polyamine biosynthesis; ectoine biosynthesis; L-ectoine from L-aspartate 4-semialdehyde: step 3/3. Its function is as follows. Catalyzes the circularization of gamma-N-acetyl-alpha,gamma-diaminobutyric acid (ADABA) to ectoine (1,4,5,6-tetrahydro-2-methyl-4-pyrimidine carboxylic acid), which is an excellent osmoprotectant. In Desulfosudis oleivorans (strain DSM 6200 / JCM 39069 / Hxd3) (Desulfococcus oleovorans), this protein is L-ectoine synthase.